A 425-amino-acid polypeptide reads, in one-letter code: MRLSECYVPTMKDVSSDVVVASHKYSLRAGLVRQNASGLYTWLPLGLKVLRTIERIVREEMDSSGFLEILMPSVQPADLWRESLRYDSYGPEMLRMQDRSGREMVFGPTHEEAISDVVRSSLKSYRDLPINLYQIQWKFRDELRPRHGIMRGREFLMKDAYSFDVDFEGVMRSYENVFSAYFRIFRRLGLVPIAAKADSGAIGGSISHEFHVLVPTGESTVYHDKKALDLSKNDYCTTEEIASVYAATEDAHDPQNCGVDPNDLQVSKGIEVAHVFYLGDRYSAPMNVKFHDKDGNSAHALMGCYGIGISRLVAAIIEVFHDDVGIRWPESIAPFKVGIVNLLTTNEDCKTTAETIYAALADSSLYDDSTDSPGVKLARMDLLGMPWQVIIGNSFVKDKVVELKNRANGATERCTVDALIARMQA.

It belongs to the class-II aminoacyl-tRNA synthetase family. ProS type 2 subfamily. As to quaternary structure, homodimer.

The protein localises to the cytoplasm. It catalyses the reaction tRNA(Pro) + L-proline + ATP = L-prolyl-tRNA(Pro) + AMP + diphosphate. Its function is as follows. Catalyzes the attachment of proline to tRNA(Pro) in a two-step reaction: proline is first activated by ATP to form Pro-AMP and then transferred to the acceptor end of tRNA(Pro). The protein is Proline--tRNA ligase of Anaplasma marginale (strain St. Maries).